The sequence spans 434 residues: Serine hydroxymethyltransferase (434 aa).

(6S)-5,6,7,8-tetrahydrofolate contacts are provided by residues L131 and 135–137; that span reads GHL. K240 is modified (N6-(pyridoxal phosphate)lysine).

Belongs to the SHMT family. In terms of assembly, homodimer. It depends on pyridoxal 5'-phosphate as a cofactor.

It localises to the cytoplasm. The enzyme catalyses (6R)-5,10-methylene-5,6,7,8-tetrahydrofolate + glycine + H2O = (6S)-5,6,7,8-tetrahydrofolate + L-serine. It functions in the pathway one-carbon metabolism; tetrahydrofolate interconversion. It participates in amino-acid biosynthesis; glycine biosynthesis; glycine from L-serine: step 1/1. Catalyzes the reversible interconversion of serine and glycine with tetrahydrofolate (THF) serving as the one-carbon carrier. This reaction serves as the major source of one-carbon groups required for the biosynthesis of purines, thymidylate, methionine, and other important biomolecules. Also exhibits THF-independent aldolase activity toward beta-hydroxyamino acids, producing glycine and aldehydes, via a retro-aldol mechanism. The chain is Serine hydroxymethyltransferase from Gluconobacter oxydans (strain 621H) (Gluconobacter suboxydans).